We begin with the raw amino-acid sequence, 433 residues long: GTPase Der (433 aa).

EngA-type G domains follow at residues 3-167 (NIVA…QDTI) and 174-349 (PKIA…TNKT). GTP contacts are provided by residues 9–16 (GRPNVGKS), 56–60 (DTGGY), 119–122 (NKAD), 180–187 (GRPNVGKS), 227–231 (DTAGI), and 292–295 (NKWD). Positions 350–433 (QKISTAALNQ…VPVQLVFRKK (84 aa)) constitute a KH-like domain.

It belongs to the TRAFAC class TrmE-Era-EngA-EngB-Septin-like GTPase superfamily. EngA (Der) GTPase family. In terms of assembly, associates with the 50S ribosomal subunit.

Functionally, GTPase that plays an essential role in the late steps of ribosome biogenesis. This Amoebophilus asiaticus (strain 5a2) protein is GTPase Der.